The following is a 473-amino-acid chain: Spliceosome-associated protein CWC27 homolog (473 aa).

At S2 the chain carries N-acetylserine. A PPIase cyclophilin-type domain is found at 11–166 (TNGKVLLKTT…NSHKIRSCEV (156 aa)). Over residues 178 to 193 (EIKKPKKEKPEEEVKK) the composition is skewed to basic and acidic residues. 3 disordered regions span residues 178–197 (EIKK…LKPK), 203–383 (SLLS…TSRE), and 401–473 (IAET…KERR). The stretch at 206–230 (SFGEEAEEEEEEVNRVSQSMKGKSK) forms a coiled coil. The segment covering 231–241 (SSHDLLKDDPH) has biased composition (basic and acidic residues). Residues 252–254 (RGD) carry the Cell attachment site motif. Residues 256-266 (AEDSDDDGEYE) are compositionally biased toward acidic residues. Composition is skewed to basic and acidic residues over residues 267–348 (GAEH…KRSE) and 360–372 (EYRR…EALR). Residues 311 to 378 (VSRSEELRKE…EALRKQQAKT (68 aa)) are a coiled coil. Phosphoserine is present on S347. The segment covering 405-419 (PENDISETEVEDDEG) has biased composition (acidic residues). Composition is skewed to basic and acidic residues over residues 426–438 (QFED…KDAS) and 458–473 (RREE…KERR).

Belongs to the cyclophilin-type PPIase family. As to quaternary structure, part of the activated spliceosome B/catalytic step 1 spliceosome, one of the forms of the spliceosome which has a well-formed active site but still cannot catalyze the branching reaction and is composed at least of 52 proteins, the U2, U5 and U6 snRNAs and the pre-mRNA. Recruited during early steps of activated spliceosome B maturation, it is probably one of the first proteins released from this complex as he matures to the spliceosome C complex. Component of the minor spliceosome, which splices U12-type introns.

The protein localises to the nucleus. As part of the spliceosome, plays a role in pre-mRNA splicing. Probable inactive PPIase with no peptidyl-prolyl cis-trans isomerase activity. As a component of the minor spliceosome, involved in the splicing of U12-type introns in pre-mRNAs. This is Spliceosome-associated protein CWC27 homolog from Bos taurus (Bovine).